A 124-amino-acid chain; its full sequence is Ribulose bisphosphate carboxylase small subunit (124 aa).

Belongs to the RuBisCO small chain family. As to quaternary structure, heterohexadecamer of 8 large and 8 small subunits.

Functionally, ruBisCO catalyzes two reactions: the carboxylation of D-ribulose 1,5-bisphosphate, the primary event in carbon dioxide fixation, as well as the oxidative fragmentation of the pentose substrate. Both reactions occur simultaneously and in competition at the same active site. Although the small subunit is not catalytic it is essential for maximal activity. This Hydrogenophilus thermoluteolus (Pseudomonas hydrogenothermophila) protein is Ribulose bisphosphate carboxylase small subunit.